A 20-amino-acid chain; its full sequence is Glutathione S-transferase 2 (20 aa).

One can recognise a GST N-terminal domain in the interval 1-20 (GYKVTYFAIRGLAEPIXLLL). Tyr-6 contributes to the glutathione binding site.

The protein belongs to the GST superfamily. Sigma family.

The enzyme catalyses RX + glutathione = an S-substituted glutathione + a halide anion + H(+). Functionally, conjugation of reduced glutathione to a wide number of exogenous and endogenous hydrophobic electrophiles. This Ascaris suum (Pig roundworm) protein is Glutathione S-transferase 2 (GST2).